A 79-amino-acid polypeptide reads, in one-letter code: Protein GOLVEN 2 (79 aa).

The first 26 residues, 1-26, serve as a signal peptide directing secretion; it reads MAIRVSHKSFLVALLLILFISSPTQA. Positions 27-65 are excised as a propeptide; it reads RSLREVVRNRTLLVVEKSQESRKIRHEGGGSDVDGLMDM. The interval 49–79 is disordered; sequence KIRHEGGGSDVDGLMDMDYNSANKKRPIHNR. Residue tyrosine 67 is modified to Sulfotyrosine. Position 75 is a hydroxyproline (proline 75).

This sequence belongs to the RGF family. Binds to LRR receptor-like serine/threonine-protein kinases to trigger their dimerization with SERK proteins and subsequent signaling. Expressed in siliques, stems, hypocotyls, shoot apex, leaves, flowers and cotyledons, and, to a lower extent, in roots.

It is found in the secreted. The protein localises to the endoplasmic reticulum. Signaling peptide (root growth factor) that regulates the pattern of root growth and lateral root development by modulating the length and the number of cortical cells in the root apical meristem (RAM), and the anticlinal asymmetric cell divisions in lateral root initiation cells. Also involved in the regulation of hypocotyl bending and root gravitropism, probably by influencing the formation of auxin gradients. Maintains the postembryonic root stem cell niche. In Arabidopsis thaliana (Mouse-ear cress), this protein is Protein GOLVEN 2.